Reading from the N-terminus, the 57-residue chain is Large ribosomal subunit protein bL32 (57 aa).

The tract at residues 1–38 (MAVQQNKPTRSKRGMRRSHDALTAVTSLSVDQTSGEKH) is disordered. The span at 24–33 (AVTSLSVDQT) shows a compositional bias: polar residues.

The protein belongs to the bacterial ribosomal protein bL32 family.

This is Large ribosomal subunit protein bL32 from Enterobacter sp. (strain 638).